Consider the following 114-residue polypeptide: Fumarate reductase subunit D (114 aa).

3 helical membrane passes run 25-45 (SGLA…FGII), 50-70 (IIAF…TIFP), and 94-114 (LIFY…VIAI).

The protein belongs to the FrdD family. As to quaternary structure, part of an enzyme complex containing four subunits: a flavoprotein (FrdA), an iron-sulfur protein (FrdB), and two hydrophobic anchor proteins (FrdC and FrdD).

It is found in the cell inner membrane. Its function is as follows. Anchors the catalytic components of the fumarate reductase complex to the cell membrane, binds quinones. The protein is Fumarate reductase subunit D of Mannheimia succiniciproducens (strain KCTC 0769BP / MBEL55E).